A 623-amino-acid polypeptide reads, in one-letter code: Cilia- and flagella-associated protein 52 (623 aa).

WD repeat units follow at residues 65–109 (GHGN…LMAR), 112–153 (LHKG…AICG), 159–198 (LNVGNATTVIFSKCRDEMFVTAGNGTIRVWELDLPNRKIW), 291–330 (QLQGGITSITLRGEGHQFFVGTEESHIYRVNFTNFKETLI), 333–372 (CHFESVEDIVFPFGTAELFATCAKKDIRVWHTLTNRELLR), 375–414 (VPNMTCHGIDFMRDGKSIISAWDDGRIRAFAPETGRLMYV), 418–457 (AHRIGVTAIATTSDCKRVISGGGEGEVRVWHIGHQTQKLE), 462–501 (EHKSSVSCIRVKKSNEECVTASTDGTCIIWDLVRLRRNQM), 503–544 (LANT…RELD), 546–585 (SLSGAVNGMDITVEGVHFVTGGNDHLVKVWDYNEGEVTHV), and 588–623 (GHSGNITRIRISPGNQYIVSVSADGAILRWKYPFPS).

Belongs to the CFAP52 family. As to quaternary structure, microtubule inner protein component of sperm flagellar doublet microtubules. Interacts with BRCA2. Interacts with the CCT chaperonin complex. Interacts with HSP70. Interacts with AK8. Interacts with CFAP45. Interacts with DNAI1. Interacts with IQDC. Expressed in trachea multiciliated cells.

The protein localises to the cytoplasm. The protein resides in the cytoskeleton. Its subcellular location is the cilium axoneme. It localises to the flagellum axoneme. Microtubule inner protein (MIP) part of the dynein-decorated doublet microtubules (DMTs) in cilia axoneme. Important for proper ciliary and flagellar beating. May act in cooperation with CFAP45 and axonemal dynein subunit DNAH11. May play a role in cell growth and/or survival. The chain is Cilia- and flagella-associated protein 52 (CFAP52) from Bos taurus (Bovine).